The sequence spans 83 residues: Small ribosomal subunit protein eS21 (83 aa).

It belongs to the eukaryotic ribosomal protein eS21 family. As to quaternary structure, component of the 40S small ribosomal subunit.

It localises to the cytoplasm. The protein localises to the cytosol. The protein resides in the rough endoplasmic reticulum. Its function is as follows. Component of the small ribosomal subunit. The ribosome is a large ribonucleoprotein complex responsible for the synthesis of proteins in the cell. The protein is Small ribosomal subunit protein eS21 (rps21) of Xenopus tropicalis (Western clawed frog).